We begin with the raw amino-acid sequence, 60 residues long: Ixodegrin-like peptide (60 aa).

A signal peptide spans 1-21 (MNAAFIAALLILGALTLDAMA). Residues 49-51 (RGD) carry the Cell attachment site motif.

Belongs to the ixodegrin family. Contains 3 disulfide bonds. Expressed in salivary glands.

Its subcellular location is the secreted. Tick salivary platelet aggregation inhibitor that plays an important part in the anti-hemostatic strategy of ticks. Inhibits platelet aggregation induced by ADP, thrombin and thromboxane A2 (TXA2). Blocks platelet adhesion to soluble collagen (most probably through the binding to alpha-2/beta-1 integrin (ITGA2/ITGB1)) and binds to purified glycoprotein IIb/IIIa (ITGA2B/ITGB3) in a dose-dependent manner. In vivo, reduces thrombus weight effectively in a rat arteriovenous shunt model and inhibits thrombosis in a carrageenan-induced mouse tail thrombosis model. In Ixodes scapularis (Black-legged tick), this protein is Ixodegrin-like peptide.